Reading from the N-terminus, the 393-residue chain is Major outer membrane porin, serovar E (393 aa).

Positions 1 to 22 (MKKLLKSVLVFAALSSASSLQA) are cleaved as a signal peptide.

This sequence belongs to the chlamydial porin (CP) (TC 1.B.2) family. As to quaternary structure, part of a disulfide cross-linked outer membrane complex (COMC) composed of the major outer membrane porin (MOMP), the small cysteine-rich protein (OmcA) and the large cysteine-rich periplasmic protein (OmcB).

The protein resides in the cell outer membrane. In elementary bodies (EBs, the infectious stage, which is able to survive outside the host cell) provides the structural integrity of the outer envelope through disulfide cross-links with the small cysteine-rich protein and the large cysteine-rich periplasmic protein. It has been described in publications as the Sarkosyl-insoluble COMC (Chlamydia outer membrane complex), and serves as the functional equivalent of peptidoglycan. Its function is as follows. Permits diffusion of specific solutes through the outer membrane. The sequence is that of Major outer membrane porin, serovar E (ompA) from Chlamydia trachomatis.